A 429-amino-acid chain; its full sequence is MRAMQTHTEIAPMPIPGHVDPVPVPREVTPREDGRIDLIGLPRKQIAELFAQAGLDAKAAKLRAKQVFHWLYHRGVTDFDAMTDIAKTMRPWLAERFVIGRPEIVEAQVSTDGTRKWLLRTADKHDFEMVFIPDADRGTLCVSSQVGCTLNCRFCHTGTMRLVRNLTPGEIVGQVMLARDALGEWPKGANDSRVATMAGLDFDDEDEGSYTSDGRLLTNIVMMGMGEPLYNFDNVRDALKLVMDGDGLALSKRRITLSTSGVVPMMERCGEEIGVNLAVSLHAVTKDVRDEIVPINRKYGIEELLQACADYPGASNARRITFEYVMLKDKNDSDDHARELVRLIRQYKLPAKVNLIPFNPWPGAPYECSSPDRIKSFANIVFEAGISAPVRTPRGRDIDAACGQLKTASERKSRAELDRLAEEKLAALG.

Residues 1 to 23 (MRAMQTHTEIAPMPIPGHVDPVP) form a disordered region. Catalysis depends on glutamate 128, which acts as the Proton acceptor. The Radical SAM core domain occupies 134-397 (DADRGTLCVS…APVRTPRGRD (264 aa)). Cysteine 141 and cysteine 402 are disulfide-bonded. [4Fe-4S] cluster is bound by residues cysteine 148, cysteine 152, and cysteine 155. S-adenosyl-L-methionine-binding positions include 226-227 (GE), serine 258, 280-282 (SLH), and asparagine 359. Catalysis depends on cysteine 402, which acts as the S-methylcysteine intermediate.

This sequence belongs to the radical SAM superfamily. RlmN family. Requires [4Fe-4S] cluster as cofactor.

Its subcellular location is the cytoplasm. The catalysed reaction is adenosine(2503) in 23S rRNA + 2 reduced [2Fe-2S]-[ferredoxin] + 2 S-adenosyl-L-methionine = 2-methyladenosine(2503) in 23S rRNA + 5'-deoxyadenosine + L-methionine + 2 oxidized [2Fe-2S]-[ferredoxin] + S-adenosyl-L-homocysteine. The enzyme catalyses adenosine(37) in tRNA + 2 reduced [2Fe-2S]-[ferredoxin] + 2 S-adenosyl-L-methionine = 2-methyladenosine(37) in tRNA + 5'-deoxyadenosine + L-methionine + 2 oxidized [2Fe-2S]-[ferredoxin] + S-adenosyl-L-homocysteine. In terms of biological role, specifically methylates position 2 of adenine 2503 in 23S rRNA and position 2 of adenine 37 in tRNAs. m2A2503 modification seems to play a crucial role in the proofreading step occurring at the peptidyl transferase center and thus would serve to optimize ribosomal fidelity. This chain is Dual-specificity RNA methyltransferase RlmN, found in Novosphingobium aromaticivorans (strain ATCC 700278 / DSM 12444 / CCUG 56034 / CIP 105152 / NBRC 16084 / F199).